The chain runs to 88 residues: Small ribosomal subunit protein uS19 (88 aa).

The protein belongs to the universal ribosomal protein uS19 family.

In terms of biological role, protein S19 forms a complex with S13 that binds strongly to the 16S ribosomal RNA. This chain is Small ribosomal subunit protein uS19, found in Chlamydia felis (strain Fe/C-56) (Chlamydophila felis).